A 322-amino-acid chain; its full sequence is MQNLQGMLRDQRVAQDLQEVIFSIELACKDIAKKVQLGALAGVLGATESENVQGETQKKLDVISNDILKASLAANSNVLALASEEEDNVVAANAGGRYVVAFDPLDGSSNIDINGQIGTIFTIFEALDGVAANSGKHFLQQGNKQVCAGYVLYGASTLMVITVDGPTSCLTLDPATQTFSLTNTALQVPDQTQEFAVNLANERFWLPKFKSYVADLKLGEEGVRGKRFNMRWNASMVGDVHRVLMRGGIFMYPSDTRNPKQPAKLRLLYEANPMALLIERAGGKAFNETQRILDVTPCALHERIAVILGSEQEVATCLEYLN.

4 residues coordinate Mg(2+): glutamate 84, aspartate 103, leucine 105, and aspartate 106. Residues 106–109, asparagine 198, and lysine 264 each bind substrate; that span reads DGSS. Glutamate 270 provides a ligand contact to Mg(2+).

Belongs to the FBPase class 1 family. As to quaternary structure, homotetramer. Mg(2+) serves as cofactor.

It localises to the cytoplasm. The enzyme catalyses beta-D-fructose 1,6-bisphosphate + H2O = beta-D-fructose 6-phosphate + phosphate. The protein operates within carbohydrate biosynthesis; gluconeogenesis. This chain is Fructose-1,6-bisphosphatase class 1, found in Saccharophagus degradans (strain 2-40 / ATCC 43961 / DSM 17024).